A 960-amino-acid chain; its full sequence is Mast/stem cell growth factor receptor Kit (960 aa).

Positions 1-24 (MEGAHLAWELAHAVLLLSLIPAGG) are cleaved as a signal peptide. Residues 25–511 (SVPHEESSLV…IRTHTLFTPL (487 aa)) lie on the Extracellular side of the membrane. Ig-like C2-type domains follow at residues 27–102 (PHEE…VFVK), 111–194 (DSLI…LNVR), 201–294 (PVIT…LKAL), 303–396 (ATMN…VYVK), and 399–497 (PEIL…FNFA). Disulfide bonds link cysteine 45–cysteine 87, cysteine 126–cysteine 175, cysteine 141–cysteine 172, and cysteine 222–cysteine 276. Residues asparagine 76, asparagine 135, asparagine 149, asparagine 269, asparagine 286, asparagine 306, asparagine 318, asparagine 338, asparagine 343, asparagine 356, asparagine 453, and asparagine 469 are each glycosylated (N-linked (GlcNAc...) asparagine). The cysteines at positions 414 and 481 are disulfide-linked. Residues 512 to 532 (LIAFGVAAGLMCIIVMILVYI) form a helical membrane-spanning segment. Topologically, residues 533 to 960 (YLQKPKYEVQ…TQPLLVREDV (428 aa)) are cytoplasmic. Tyrosine 554 contacts Mg(2+). A phosphotyrosine; by autocatalysis mark is found at tyrosine 554 and tyrosine 556. The 339-residue stretch at 575–913 (LSFGKTLGAG…QIVQLIEQQL (339 aa)) folds into the Protein kinase domain. ATP contacts are provided by residues 582 to 589 (GAGAFGKV), lysine 609, and 657 to 663 (EYCCYGD). 2 positions are modified to phosphotyrosine; by autocatalysis: tyrosine 689 and tyrosine 706. The active-site Proton acceptor is aspartate 777. Arginine 781 contributes to the ATP binding site. The Mg(2+) site is built by asparagine 782 and aspartate 795. Phosphotyrosine; by autocatalysis is present on residues tyrosine 808 and tyrosine 921.

The protein belongs to the protein kinase superfamily. Tyr protein kinase family. CSF-1/PDGF receptor subfamily. Post-translationally, ubiquitinated. KIT is rapidly ubiquitinated after autophosphorylation induced by KITLG/SCF binding, leading to internalization and degradation. In terms of processing, autophosphorylated on tyrosine residues. KITLG/SCF binding promotes autophosphorylation. Phosphorylated tyrosine residues are important for interaction with specific binding partners. As to expression, high in the brain and testes and also present in the bursa of Fabricus, heart, kidney, lung, spleen thymus and ovary.

It is found in the cell membrane. It carries out the reaction L-tyrosyl-[protein] + ATP = O-phospho-L-tyrosyl-[protein] + ADP + H(+). Functionally, tyrosine-protein kinase that acts as a cell-surface receptor for the cytokine KITLG/SCF and plays an essential role in the regulation of cell survival and proliferation, hematopoiesis, stem cell maintenance, gametogenesis, mast cell development, migration and function, and in melanogenesis. In response to KITLG/SCF binding, KIT can activate several signaling pathways. Promotes phosphorylation of PIK3R1, the regulatory subunit of phosphatidylinositol 3-kinase, and subsequent activation of the kinase AKT1. Activated KIT also transmits signals via GRB2 and activation of RAS, RAF1 and the MAP kinases MAPK1/ERK2 and/or MAPK3/ERK1. Promotes activation of STAT family members STAT1, STAT3, STAT5A and STAT5B. KIT promotes activation of PLCG1, leading to the production of the cellular signaling molecules diacylglycerol and inositol 1,4,5-trisphosphate. KIT signaling is modulated by protein phosphatases, and by rapid internalization and degradation of the receptor. The chain is Mast/stem cell growth factor receptor Kit (KIT) from Gallus gallus (Chicken).